The chain runs to 565 residues: Sulfite reductase [NADPH] hemoprotein beta-component (565 aa).

Residues Cys429, Cys435, Cys474, and Cys478 each contribute to the [4Fe-4S] cluster site. Position 478 (Cys478) interacts with siroheme.

Belongs to the nitrite and sulfite reductase 4Fe-4S domain family. Alpha(8)-beta(8). The alpha component is a flavoprotein, the beta component is a hemoprotein. It depends on siroheme as a cofactor. [4Fe-4S] cluster serves as cofactor.

It catalyses the reaction hydrogen sulfide + 3 NADP(+) + 3 H2O = sulfite + 3 NADPH + 4 H(+). It participates in sulfur metabolism; hydrogen sulfide biosynthesis; hydrogen sulfide from sulfite (NADPH route): step 1/1. Component of the sulfite reductase complex that catalyzes the 6-electron reduction of sulfite to sulfide. This is one of several activities required for the biosynthesis of L-cysteine from sulfate. The protein is Sulfite reductase [NADPH] hemoprotein beta-component of Shewanella sp. (strain W3-18-1).